Here is a 264-residue protein sequence, read N- to C-terminus: MSKITTASLLKMKQDDQKITAITAYDASFAKLFDDEGAHVLLIGDSLGMVLQGGQDTLAVSVDEMVYHTRCVARGASNALIIADMPFMSYATPEQTYQTAARLMAAGARMVKMEGGDWLCDSIRHLTRNGVPVCGHLGLTPQSVHVFGGFKVQGRDEYQAQEIYRQALCLQEAGIQLLVLECVPVALAERITKALRIPVIGIGAGPATDGQILVMHDAFGITSGYVPKFTKNFLAETGDMHAAIRLYVQQVSEGTFPGPEHSFN.

Positions 45 and 84 each coordinate Mg(2+). Residues 45–46 (DS), Asp-84, and Lys-112 each bind 3-methyl-2-oxobutanoate. Glu-114 contributes to the Mg(2+) binding site. The active-site Proton acceptor is the Glu-181.

This sequence belongs to the PanB family. In terms of assembly, homodecamer; pentamer of dimers. Mg(2+) is required as a cofactor.

The protein resides in the cytoplasm. The catalysed reaction is 3-methyl-2-oxobutanoate + (6R)-5,10-methylene-5,6,7,8-tetrahydrofolate + H2O = 2-dehydropantoate + (6S)-5,6,7,8-tetrahydrofolate. The protein operates within cofactor biosynthesis; (R)-pantothenate biosynthesis; (R)-pantoate from 3-methyl-2-oxobutanoate: step 1/2. Its function is as follows. Catalyzes the reversible reaction in which hydroxymethyl group from 5,10-methylenetetrahydrofolate is transferred onto alpha-ketoisovalerate to form ketopantoate. This Aeromonas salmonicida (strain A449) protein is 3-methyl-2-oxobutanoate hydroxymethyltransferase.